The following is a 204-amino-acid chain: LexA repressor (204 aa).

The H-T-H motif DNA-binding region spans 27 to 47 (VREIGEAVGLASSSTVHGHLA). Residues Ser-126 and Lys-164 each act as for autocatalytic cleavage activity in the active site.

This sequence belongs to the peptidase S24 family. Homodimer.

It carries out the reaction Hydrolysis of Ala-|-Gly bond in repressor LexA.. In terms of biological role, represses a number of genes involved in the response to DNA damage (SOS response), including recA and lexA. In the presence of single-stranded DNA, RecA interacts with LexA causing an autocatalytic cleavage which disrupts the DNA-binding part of LexA, leading to derepression of the SOS regulon and eventually DNA repair. This Listeria welshimeri serovar 6b (strain ATCC 35897 / DSM 20650 / CCUG 15529 / CIP 8149 / NCTC 11857 / SLCC 5334 / V8) protein is LexA repressor.